A 271-amino-acid polypeptide reads, in one-letter code: DNA repair protein RecO (271 aa).

The protein belongs to the RecO family.

In terms of biological role, involved in DNA repair and RecF pathway recombination. The polypeptide is DNA repair protein RecO (Synechococcus sp. (strain CC9311)).